Here is a 311-residue protein sequence, read N- to C-terminus: MPRMPDSSSLFDELQDLATEQQNPHSTHIDTASVEEILRVINTEDHKVPIAVRRELPHIAEAVEIVVEAFEADGRLFYVGAGTSGRLGVVDASECPPTFGTDPERVQGIIAGGREAVFRSQEGAEDVPERGAQALKGQGVTENDVVCGIASSGRTPFVVGAVEHARDAIGCPTLFVTTIPREELDVDPDVAICPVVGPEVIMGSTRMKSGTAQKLVLNMITTAAMVRLGKVYENMMVDLRRTSEKLVERGIRTVMMVTGVDYDAADAVLTRCDGHVKTALVMILADVEVDEARRRLDATDGFVRPAIEGDE.

In terms of domain architecture, SIS spans 66 to 230 (VVEAFEADGR…TTAAMVRLGK (165 aa)). The active-site Proton donor is glutamate 94. Glutamate 125 is a catalytic residue.

This sequence belongs to the GCKR-like family. MurNAc-6-P etherase subfamily. As to quaternary structure, homodimer.

The catalysed reaction is N-acetyl-D-muramate 6-phosphate + H2O = N-acetyl-D-glucosamine 6-phosphate + (R)-lactate. The protein operates within amino-sugar metabolism; N-acetylmuramate degradation. Functionally, specifically catalyzes the cleavage of the D-lactyl ether substituent of MurNAc 6-phosphate, producing GlcNAc 6-phosphate and D-lactate. This Salinibacter ruber (strain DSM 13855 / M31) protein is N-acetylmuramic acid 6-phosphate etherase.